Consider the following 312-residue polypeptide: MLQYQIERIDHQIADDRSQTGTFLIGPLERGQATTLGNSLRRVLMGGLEGSAVTAVRIAGINHEYATIPGVREDVLDILLNCKQLSINSTNPELEIGRLVASGPMEVKANDIQFSSQVEIVDGEKPIATIQEGHNLELEIHVERGVGYRPVDRKSEETTAIDLLQIDAVFMPVKRVNFTIDETAVAEGGTGRERLKMEVVTDGSTSPDDAIAEAANQLIELFQPLATVTMVEEIPEEPEPSPEAQIPLEELNLSVRAYNCLKRAQVNSVSDLMGFSYEDLLEIKNFGSKSADEVIEALERIGISIPQSRTSV.

Positions 1-229 (MLQYQIERID…ELFQPLATVT (229 aa)) are alpha N-terminal domain (alpha-NTD). Residues 240–312 (PSPEAQIPLE…ISIPQSRTSV (73 aa)) are alpha C-terminal domain (alpha-CTD).

This sequence belongs to the RNA polymerase alpha chain family. As to quaternary structure, in cyanobacteria the RNAP catalytic core is composed of 2 alpha, 1 beta, 1 beta', 1 gamma and 1 omega subunit. When a sigma factor is associated with the core the holoenzyme is formed, which can initiate transcription.

It catalyses the reaction RNA(n) + a ribonucleoside 5'-triphosphate = RNA(n+1) + diphosphate. In terms of biological role, DNA-dependent RNA polymerase catalyzes the transcription of DNA into RNA using the four ribonucleoside triphosphates as substrates. The protein is DNA-directed RNA polymerase subunit alpha of Prochlorococcus marinus (strain MIT 9301).